Here is a 483-residue protein sequence, read N- to C-terminus: Regulatory protein ViaA (483 aa).

Belongs to the ViaA family. As to quaternary structure, homodimer. Interacts with RavA.

The protein resides in the cytoplasm. In terms of biological role, component of the RavA-ViaA chaperone complex, which may act on the membrane to optimize the function of some of the respiratory chains. ViaA stimulates the ATPase activity of RavA. The chain is Regulatory protein ViaA from Escherichia coli O7:K1 (strain IAI39 / ExPEC).